A 439-amino-acid polypeptide reads, in one-letter code: 3-phosphoshikimate 1-carboxyvinyltransferase (439 aa).

Residues lysine 25, serine 26, and arginine 30 each contribute to the 3-phosphoshikimate site. Phosphoenolpyruvate is bound at residue lysine 25. Phosphoenolpyruvate-binding residues include glycine 96 and arginine 124. Positions 170, 171, 172, 202, 324, and 351 each coordinate 3-phosphoshikimate. Phosphoenolpyruvate is bound at residue glutamine 172. Aspartate 324 serves as the catalytic Proton acceptor. Phosphoenolpyruvate is bound by residues arginine 355, arginine 399, and lysine 424.

Belongs to the EPSP synthase family. As to quaternary structure, monomer.

It is found in the cytoplasm. It catalyses the reaction 3-phosphoshikimate + phosphoenolpyruvate = 5-O-(1-carboxyvinyl)-3-phosphoshikimate + phosphate. It functions in the pathway metabolic intermediate biosynthesis; chorismate biosynthesis; chorismate from D-erythrose 4-phosphate and phosphoenolpyruvate: step 6/7. Its function is as follows. Catalyzes the transfer of the enolpyruvyl moiety of phosphoenolpyruvate (PEP) to the 5-hydroxyl of shikimate-3-phosphate (S3P) to produce enolpyruvyl shikimate-3-phosphate and inorganic phosphate. This is 3-phosphoshikimate 1-carboxyvinyltransferase from Bordetella avium (strain 197N).